A 508-amino-acid chain; its full sequence is Protein adenylyltransferase Fic (508 aa).

A helical membrane pass occupies residues 48 to 70 (FYRFALFFIAGSFAAFSFHALTS). TPR repeat units lie at residues 132 to 165 (ALGA…APKH) and 166 to 200 (PEVL…CPSN). The short motif at 257 to 262 (SVGIEG) is the Inhibitory (S/T)XXXE(G/N) motif element. ATP is bound by residues Glu-261 and 342–345 (VGGH). Residues 311-446 (ITIKDILELH…IRPFVRFIAD (136 aa)) form the Fido domain. His-389 is an active-site residue. Residues 393–400 (DGNGRTSR), 425–426 (YY), and Asn-433 contribute to the ATP site.

It belongs to the fic family. Homodimer.

The protein resides in the membrane. The catalysed reaction is L-tyrosyl-[protein] + ATP = O-(5'-adenylyl)-L-tyrosyl-[protein] + diphosphate. It carries out the reaction L-threonyl-[protein] + ATP = 3-O-(5'-adenylyl)-L-threonyl-[protein] + diphosphate. It catalyses the reaction 3-O-(5'-adenylyl)-L-threonyl-[protein] + H2O = L-threonyl-[protein] + AMP + H(+). Its activity is regulated as follows. The side chain of Glu-261 determines which of the two opposing activities (AMPylase or de-AMPylase) will take place. In response to endoplasmic reticulum stress, mediates de-AMPylase activity. Adenylyltransferase activity is inhibited by the inhibitory helix present at the N-terminus: Glu-261 binds ATP and competes with ATP-binding at Arg-400, thereby preventing adenylyltransferase activity. In unstressed cells, disengagement of Glu-261 promotes adenylyltransferase activity. Activation dissociates ATP-binding from Glu-261, allowing ordered binding of the entire ATP moiety with the alpha-phosphate in an orientation that is productive for accepting an incoming target hydroxyl side chain. Protein that can both mediate the addition of adenosine 5'-monophosphate (AMP) to specific residues of target proteins (AMPylation), and the removal of the same modification from target proteins (de-AMPylation), depending on the context. The side chain of Glu-261 determines which of the two opposing activities (AMPylase or de-AMPylase) will take place. Acts as a key regulator of the unfolded protein response (UPR) by mediating AMPylation or de-AMPylation of Hsc70-3/BiP. In unstressed cells, acts as an adenylyltransferase by mediating AMPylation of Hsc70-3/BiP at 'Thr-518', thereby inactivating it. In response to endoplasmic reticulum stress, acts as a phosphodiesterase by mediating removal of ATP (de-AMPylation) from Hsc70-3/BiP at 'Thr-518', leading to restore HSPA5/BiP activity. The chain is Protein adenylyltransferase Fic from Drosophila persimilis (Fruit fly).